The chain runs to 791 residues: Penicillin-binding protein 1A (791 aa).

The Cytoplasmic portion of the chain corresponds to 1-6; it reads MYKSLF. The helical; Signal-anchor for type II membrane protein transmembrane segment at 7-27 threads the bilayer; that stretch reads FCLKILALLFLIGCGIVAYII. Over 28–791 the chain is Periplasmic; sequence YYYSRDLPDY…TEKDQSQEIY (764 aa). Positions 49-220 are transglycosylase; it reads TRIYSRDGKL…SELNPEKNYA (172 aa). The active-site Proton donor; for transglycosylase activity is glutamate 87. Residues 398–711 are transpeptidase; the sequence is DVIVVEPVKD…SSVVLPIFID (314 aa). Serine 457 acts as the Acyl-ester intermediate; for transpeptidase activity in catalysis.

This sequence in the N-terminal section; belongs to the glycosyltransferase 51 family. In the C-terminal section; belongs to the transpeptidase family.

The protein resides in the cell inner membrane. It carries out the reaction [GlcNAc-(1-&gt;4)-Mur2Ac(oyl-L-Ala-gamma-D-Glu-L-Lys-D-Ala-D-Ala)](n)-di-trans,octa-cis-undecaprenyl diphosphate + beta-D-GlcNAc-(1-&gt;4)-Mur2Ac(oyl-L-Ala-gamma-D-Glu-L-Lys-D-Ala-D-Ala)-di-trans,octa-cis-undecaprenyl diphosphate = [GlcNAc-(1-&gt;4)-Mur2Ac(oyl-L-Ala-gamma-D-Glu-L-Lys-D-Ala-D-Ala)](n+1)-di-trans,octa-cis-undecaprenyl diphosphate + di-trans,octa-cis-undecaprenyl diphosphate + H(+). The enzyme catalyses Preferential cleavage: (Ac)2-L-Lys-D-Ala-|-D-Ala. Also transpeptidation of peptidyl-alanyl moieties that are N-acyl substituents of D-alanine.. Its pathway is cell wall biogenesis; peptidoglycan biosynthesis. Functionally, cell wall formation. Synthesis of cross-linked peptidoglycan from the lipid intermediates. The enzyme has a penicillin-insensitive transglycosylase N-terminal domain (formation of linear glycan strands) and a penicillin-sensitive transpeptidase C-terminal domain (cross-linking of the peptide subunits). This chain is Penicillin-binding protein 1A (mrcA), found in Rickettsia bellii (strain RML369-C).